The chain runs to 511 residues: Bifunctional purine biosynthesis protein PurH (511 aa).

An MGS-like domain is found at 1–147; it reads MIQIKRALIS…KNYKHTLVLT (147 aa).

Belongs to the PurH family.

It catalyses the reaction (6R)-10-formyltetrahydrofolate + 5-amino-1-(5-phospho-beta-D-ribosyl)imidazole-4-carboxamide = 5-formamido-1-(5-phospho-D-ribosyl)imidazole-4-carboxamide + (6S)-5,6,7,8-tetrahydrofolate. The catalysed reaction is IMP + H2O = 5-formamido-1-(5-phospho-D-ribosyl)imidazole-4-carboxamide. It functions in the pathway purine metabolism; IMP biosynthesis via de novo pathway; 5-formamido-1-(5-phospho-D-ribosyl)imidazole-4-carboxamide from 5-amino-1-(5-phospho-D-ribosyl)imidazole-4-carboxamide (10-formyl THF route): step 1/1. The protein operates within purine metabolism; IMP biosynthesis via de novo pathway; IMP from 5-formamido-1-(5-phospho-D-ribosyl)imidazole-4-carboxamide: step 1/1. This chain is Bifunctional purine biosynthesis protein PurH, found in Leptospira interrogans serogroup Icterohaemorrhagiae serovar Lai (strain 56601).